A 317-amino-acid polypeptide reads, in one-letter code: Thymidylate synthase (317 aa).

DUMP is bound by residues Arg-40 and 167–168 (RR). Cys-187 acts as the Nucleophile in catalysis. DUMP is bound by residues 216–219 (RSCD), Asn-227, and 257–259 (HVY). Asp-219 is a binding site for (6R)-5,10-methylene-5,6,7,8-tetrahydrofolate.

The protein belongs to the thymidylate synthase family. As to quaternary structure, homodimer.

It carries out the reaction dUMP + (6R)-5,10-methylene-5,6,7,8-tetrahydrofolate = 7,8-dihydrofolate + dTMP. The protein operates within pyrimidine metabolism; dTTP biosynthesis. This is Thymidylate synthase (TMP1) from Cryptococcus neoformans var. neoformans serotype D (strain B-3501A) (Filobasidiella neoformans).